Reading from the N-terminus, the 492-residue chain is Ferruginol synthase (492 aa).

Residues methionine 1–serine 21 form a helical membrane-spanning segment. Residues glycine 22–proline 492 lie on the Cytoplasmic side of the membrane. Cysteine 436 is a binding site for heme.

The protein belongs to the cytochrome P450 family. The cofactor is heme.

The protein resides in the endoplasmic reticulum membrane. The enzyme catalyses abieta-8,11,13-triene + reduced [NADPH--hemoprotein reductase] + O2 = ferruginol + oxidized [NADPH--hemoprotein reductase] + H2O + H(+). Its pathway is secondary metabolite biosynthesis; terpenoid biosynthesis. Functionally, cytochrome P450 enzyme (CYP) which catalyzes a unique two-electron oxidation cascade on abieta-8,11,13-triene to produce ferruginol, an intermediate in tanshinone biosynthesis. The protein is Ferruginol synthase of Isodon rubescens (Rabdosia rubescens).